Reading from the N-terminus, the 467-residue chain is Glutamate--tRNA ligase (467 aa).

A 'HIGH' region motif is present at residues 12–22 (PSPTGYLHIGG). The span at 114-128 (EQEAKKEKPRYDGRW) shows a compositional bias: basic and acidic residues. The tract at residues 114 to 140 (EQEAKKEKPRYDGRWRPAPGKTLPTPP) is disordered. Residues 244-248 (KLSKR) carry the 'KMSKS' region motif. Residue Lys-247 participates in ATP binding.

The protein belongs to the class-I aminoacyl-tRNA synthetase family. Glutamate--tRNA ligase type 1 subfamily. As to quaternary structure, monomer.

Its subcellular location is the cytoplasm. It catalyses the reaction tRNA(Glu) + L-glutamate + ATP = L-glutamyl-tRNA(Glu) + AMP + diphosphate. Functionally, catalyzes the attachment of glutamate to tRNA(Glu) in a two-step reaction: glutamate is first activated by ATP to form Glu-AMP and then transferred to the acceptor end of tRNA(Glu). The protein is Glutamate--tRNA ligase of Azoarcus sp. (strain BH72).